A 142-amino-acid chain; its full sequence is Neuritin (142 aa).

Residues 1–27 (MGLKLNGRYISLILAVQIAYLVQAVRA) form the signal peptide. The GPI-anchor amidated glycine moiety is linked to residue G116. Positions 117–142 (AAGPLLPALPVLLVSLSAALATWLSF) are cleaved as a propeptide — removed in mature form.

The protein belongs to the neuritin family. Component of the outer core of AMPAR complex. AMPAR complex consists of an inner core made of 4 pore-forming GluA/GRIA proteins (GRIA1, GRIA2, GRIA3 and GRIA4) and 4 major auxiliary subunits arranged in a twofold symmetry. One of the two pairs of distinct binding sites is occupied either by CNIH2, CNIH3 or CACNG2, CACNG3. The other harbors CACNG2, CACNG3, CACNG4, CACNG8 or GSG1L. This inner core of AMPAR complex is complemented by outer core constituents binding directly to the GluA/GRIA proteins at sites distinct from the interaction sites of the inner core constituents. Outer core constituents include at least PRRT1, PRRT2, CKAMP44/SHISA9, FRRS1L and NRN1. The proteins of the inner and outer core serve as a platform for other, more peripherally associated AMPAR constituents. Alone or in combination, these auxiliary subunits control the gating and pharmacology of the AMPAR complex and profoundly impact their biogenesis and protein processing.

The protein resides in the cell membrane. It localises to the synapse. In terms of biological role, promotes neurite outgrowth and especially branching of neuritic processes in primary hippocampal and cortical cells. This is Neuritin (NRN1) from Bos taurus (Bovine).